Reading from the N-terminus, the 228-residue chain is Biosynthetic peptidoglycan transglycosylase (228 aa).

The chain crosses the membrane as a helical span at residues 8–28 (GVAALLALFLLYQLWIFGHIV).

The protein belongs to the glycosyltransferase 51 family.

The protein resides in the cell inner membrane. The catalysed reaction is [GlcNAc-(1-&gt;4)-Mur2Ac(oyl-L-Ala-gamma-D-Glu-L-Lys-D-Ala-D-Ala)](n)-di-trans,octa-cis-undecaprenyl diphosphate + beta-D-GlcNAc-(1-&gt;4)-Mur2Ac(oyl-L-Ala-gamma-D-Glu-L-Lys-D-Ala-D-Ala)-di-trans,octa-cis-undecaprenyl diphosphate = [GlcNAc-(1-&gt;4)-Mur2Ac(oyl-L-Ala-gamma-D-Glu-L-Lys-D-Ala-D-Ala)](n+1)-di-trans,octa-cis-undecaprenyl diphosphate + di-trans,octa-cis-undecaprenyl diphosphate + H(+). It participates in cell wall biogenesis; peptidoglycan biosynthesis. Functionally, peptidoglycan polymerase that catalyzes glycan chain elongation from lipid-linked precursors. The chain is Biosynthetic peptidoglycan transglycosylase from Laribacter hongkongensis (strain HLHK9).